Reading from the N-terminus, the 1342-residue chain is MVYSYTEKKRIRKDFGKRPQVLDIPYLLSIQLDSFQKFIEQDPEGQHGLEAAFRSVFPIQSYSGNSELQYVSYRLGEPVFDVKECQIRGVTFSAPLRVKLRLVIYEREAPEGTVKDIKEQEVYMGEIPLMTENGTFVINGTERVIVSQLHRSPGVFFDSDKGKTHSSGKVLYNARIIPYRGSWLDFEFDPKDNLFVRIDRRRKLPATIILRALNYTTEQILDLFFAKVVYEIRDNKLQMELVPERLRGETASFDIEANGKIYIEKGRRITARHIRQLEKDEIQSIEVPVEYIAGKVVAKDYIDTNTGELICAANMELSLDLLAKLSQSGHKRIETLFTNDLDHGAYISETVRVDPTSDRLSALVEIYRMMRPGEPPTREAAENLFENLFFSEDRYDLSAVGRMKFNRSLLRDEIEGSGILSKDDIIEVMKKLIGIRNGKGEVDDIDHLGNRRIRSVGEMAENQFRVGLVRVERAVKERLSLGDLDTLMPQDMINAKPISAAVKEFFGSSQLSQFMDQNNPLSEITHKRRISALGPGGLTRERAGFEVRDVHPTHYGRVCPIETPEGPNIGLINSLSVYAQTNEYGFLETPYRRVRDGLVTDEINYLSAIEEGNFVIAQANSNLDDDGRFVEDLVTCRSKGESSLFSRDQVDYMDVSTQQVVSVGASLIPFLEHDDANRALMGANMQRQAVPTLRADKPLVGTGMERAVAVDSGVTAVARRGGVIQYVDASRIVIKVNEDEMLAGEAGIDIYNLTKYTRSNQNTCINQMPCVNLGEPIERGDVLADGPSTDLGELALGQNMRVAFMPWNGYNFEDSILVSERVVQEDRFTTIHIQELACVSRDTKLGPEEITADIPNVGEAALSKLDESGIVYIGAEVTGGDILVGKVTPKGETQLTPEEKLLRAIFGEKASDVKDSSLRVPNGVSGTIIDVQVFTRDGVEKDKRALEIEEMQLKQAKKDLTEELQILEAGLFARIHAVLVAGGVEAEKLSKLPRDRWLELGLTDEEKQNQLEQLAEQYDELKSDFEKKLDAKRRKITQGDDLAPGVLKIVKVYLAVKRQIQPGDKMAGRHGNKGVISKINPIEDMPYDENGTPVDIVLNPLGVPSRMNIGQILETHLGMAAKGIGEKINQMLKQHQEVAKLREFIQKAYDLGDDVCQKVDLNTFTDDEVLRLAENLKKGMPIATPVFDGAKESEIKQLLEMGGIPTSGQITLFDGRTGEQFERQVTVGYMYMLKLNHLVDDKMHARSTGSYSLVTQQPLGGKAQFGGQRFGEMEVWALEAYGAAYTLQEMLTVKSDDVNGRTKMYKNIVDGDHRMEPGMPESFNVLLKEIRSLGINIELEGE.

The protein belongs to the RNA polymerase beta chain family. As to quaternary structure, the RNAP catalytic core consists of 2 alpha, 1 beta, 1 beta' and 1 omega subunit. When a sigma factor is associated with the core the holoenzyme is formed, which can initiate transcription.

It catalyses the reaction RNA(n) + a ribonucleoside 5'-triphosphate = RNA(n+1) + diphosphate. Its function is as follows. DNA-dependent RNA polymerase catalyzes the transcription of DNA into RNA using the four ribonucleoside triphosphates as substrates. This Serratia proteamaculans (strain 568) protein is DNA-directed RNA polymerase subunit beta.